Consider the following 620-residue polypeptide: MSFDIAKYPTLALVDSTQELRLLPKESLPKLCDELRRYLLDSVSRSSGHFASGLGTVELTVALHYVYNTPFDQLIWDVGHQAYPHKILTGRRDKIGTIRQKGGLHPFPWRGESEYDVLSVGHSSTSISAGIGIAVAAEKEGKNRRTVCVIGDGAITAGMAFEAMNHAGDIRPDMLVVLNDNEMSISENVGALNNHLAQLLSGKLYSSLREGGKKVFSGVPPIKELLKRTEEHIKGMVVPGTLFEELGFNYIGPVDGHDVLGLITTLKNMRDLKGPQFLHIMTKKGRGYEPAEKDPITFHAVPKFDPSSGCLPKSSGGLPSYSKIFGDWLCETAAKDNKLMAITPAMREGSGMVEFSRKFPDRYFDVAIAEQHAVTFAAGLAIGGYKPIVAIYSTFLQRAYDQVLHDVAIQKLPVLFAIDRAGIVGADGQTHQGAFDLSYLRCIPEMVIMTPSDENECRQMLYTGYHYNDGPSAVRYPRGNAVGVELTPLEKLPIGKGIVKRRGEKLAILNFGTLMPEAAKVAESLNATLVDMRFVKPLDEALILEMAASHEALVTVEENAIMGGAGSGVNEVLMAHRKPVPVLNIGLLDFFIPQGTQEEMRAELGLDATGMEAKIKAWLA.

Residues His-80 and 121 to 123 (GHS) each bind thiamine diphosphate. A Mg(2+)-binding site is contributed by Asp-152. Residues 153–154 (GA), Asn-181, Tyr-288, and Glu-370 each bind thiamine diphosphate. Position 181 (Asn-181) interacts with Mg(2+).

This sequence belongs to the transketolase family. DXPS subfamily. Homodimer. Mg(2+) is required as a cofactor. It depends on thiamine diphosphate as a cofactor.

The enzyme catalyses D-glyceraldehyde 3-phosphate + pyruvate + H(+) = 1-deoxy-D-xylulose 5-phosphate + CO2. It functions in the pathway metabolic intermediate biosynthesis; 1-deoxy-D-xylulose 5-phosphate biosynthesis; 1-deoxy-D-xylulose 5-phosphate from D-glyceraldehyde 3-phosphate and pyruvate: step 1/1. In terms of biological role, catalyzes the acyloin condensation reaction between C atoms 2 and 3 of pyruvate and glyceraldehyde 3-phosphate to yield 1-deoxy-D-xylulose-5-phosphate (DXP). In Escherichia coli O127:H6 (strain E2348/69 / EPEC), this protein is 1-deoxy-D-xylulose-5-phosphate synthase.